The primary structure comprises 86 residues: Large ribosomal subunit protein bL31B (86 aa).

This sequence belongs to the bacterial ribosomal protein bL31 family. Type B subfamily. As to quaternary structure, part of the 50S ribosomal subunit.

This Vibrio campbellii (strain ATCC BAA-1116) protein is Large ribosomal subunit protein bL31B.